The sequence spans 1946 residues: Sickle tail protein (1946 aa).

Disordered regions lie at residues 1–83 (MEES…GMQP) and 113–176 (ERLR…VRSA). Residues 18–36 (DSRQMPQQGRSNLHVTSQE) are compositionally biased toward polar residues. Over residues 38–47 (AACRRPRERL) the composition is skewed to basic and acidic residues. Position 169 is a phosphoserine (Ser169). Phosphotyrosine is present on Tyr244. 2 disordered regions span residues 305–324 (HPPH…HSLP) and 339–374 (AIPG…RDVK). The segment covering 308-324 (HVIPNSPPSTPVPHSLP) has biased composition (pro residues). A compositionally biased stretch (low complexity) spans 352–367 (SSLPVSRSISPSPSAI). Residue Ser357 is glycosylated (O-linked (GlcNAc) serine). A phosphoserine mark is found at Ser361 and Ser365. At Tyr393 the chain carries Phosphotyrosine. The tract at residues 455-512 (SRKYPDSHLPTLGSKTPPASPHRVGDLRMIDLHPHLNTHGPPHTLQPDRASPSRQSFK) is disordered. Phosphothreonine is present on Thr470. Ser474 bears the Phosphoserine mark. The span at 477 to 488 (RVGDLRMIDLHP) shows a compositional bias: basic and acidic residues. Coiled coils occupy residues 557–581 (RETR…QSAL) and 644–685 (TSLL…ELEI). Ser809 is subject to Phosphoserine. Disordered regions lie at residues 853–875 (EETA…DVKS) and 891–947 (SPVV…PVNG). Composition is skewed to polar residues over residues 891-909 (SPVV…NPAQ) and 927-947 (QEVT…PVNG). The stretch at 962–990 (SAKNRAVSIEKAEKKWEEKRQNLEHYNGK) forms a coiled coil. Positions 1008–1221 (PNLEMPPASS…LRPSGPPKWE (214 aa)) are disordered. 4 positions are modified to phosphoserine: Ser1032, Ser1035, Ser1038, and Ser1049. Pro residues predominate over residues 1049-1058 (SPPPPPPPPR). Residues 1151-1162 (NPNSHAEQSRAN) are compositionally biased toward polar residues. Basic and acidic residues predominate over residues 1176–1194 (PKEKKNLEFYHEDVRKSDV). Ser1466 carries the phosphoserine modification. Residues 1469–1495 (FEECDEELERMLTEEKIEEEEEDENED) are a coiled coil. Disordered stretches follow at residues 1482–1567 (EEKI…VDDQ), 1622–1664 (AKRF…RKST), and 1691–1946 (VDTS…KETS). Residues 1484–1495 (KIEEEEEDENED) show a composition bias toward acidic residues. The span at 1498–1508 (VRTSSQMSCEQ) shows a compositional bias: polar residues. Basic and acidic residues-rich tracts occupy residues 1509–1518 (VDSRSDRMGQ) and 1622–1644 (AKRF…RRQE). Positions 1659–1688 (EIRKSTYRTLDSLEQTIKQLENTISEMSPR) form a coiled coil. Positions 1739–1759 (KGSSTTPQTSRMPVPMTSKNR) are enriched in polar residues. Residue Ser1741 is modified to Phosphoserine. Over residues 1765-1777 (KASKQSKLQDPRQ) the composition is skewed to basic and acidic residues. Residues 1806-1825 (ALSPSSGKSSSLPSASGDSS) are compositionally biased toward low complexity. Phosphoserine is present on Ser1843. Over residues 1851–1866 (HSASLIPSVSNGSLKF) the composition is skewed to polar residues. Positions 1890-1899 (AAPTTSSSSS) are enriched in low complexity. Phosphoserine occurs at positions 1899, 1902, and 1905. Residues 1920 to 1946 (HTPSLASYKAQNGSSSKATPSTAKETS) are compositionally biased toward polar residues.

Interacts with CPNE4 (via VWFA domain). As to expression, expressed predominantly in the notochord and mesonephros during embryogenesis as well as in other areas such as the epithalamus sulcus, lens vesicle, inner retinal layer, heart, hepatic primordial surface, infundibulum, surface ectoderm, hind gut and limb bud mesenchyme. In adults, expressed in a range of tissues including the nucleus pulposus, corpus callosum, kidney, cardiac muscle, Sertoli cells and hair follicles.

It localises to the cytoplasm. It is found in the cytoskeleton. The protein localises to the microtubule organizing center. The protein resides in the centrosome. Required for normal development of intervertebral disks. The chain is Sickle tail protein from Mus musculus (Mouse).